Here is a 323-residue protein sequence, read N- to C-terminus: MIRSVVRGFGAALPKRVMTNKEMESKVDTSDEWIVQRTGIRQRYIAGDGETTASLGEAAARAALERAGLTPDDIDLIIVATSTPDNTFPATAVNIQNRLGMRHGAAFDMQAVCSGFVYAVTTGDAYIRGGLATRVLVIGAETFSRILDWTDRTTCVLFGDGAGAIVLEAQEGAGTKADRGVLTAQLRSDGAHGDKLYVDGGPSTTGTVGHLRMEGREVFKHAVGMITDVIEAAFEATGTTADDIDWLVPHQANRRIIEGSAKKLGIPLEKVVVTVDLHGNTSAASIPLALDAAATDGRIKRGDLVMLEAMGGGFTWGSVLLRW.

Residues C113 and H250 contribute to the active site. The segment at 251-255 (QANRR) is ACP-binding. The active site involves N280.

Belongs to the thiolase-like superfamily. FabH family. In terms of assembly, homodimer.

The protein localises to the cytoplasm. The catalysed reaction is malonyl-[ACP] + acetyl-CoA + H(+) = 3-oxobutanoyl-[ACP] + CO2 + CoA. The protein operates within lipid metabolism; fatty acid biosynthesis. In terms of biological role, catalyzes the condensation reaction of fatty acid synthesis by the addition to an acyl acceptor of two carbons from malonyl-ACP. Catalyzes the first condensation reaction which initiates fatty acid synthesis and may therefore play a role in governing the total rate of fatty acid production. Possesses both acetoacetyl-ACP synthase and acetyl transacylase activities. Its substrate specificity determines the biosynthesis of branched-chain and/or straight-chain of fatty acids. In Sinorhizobium medicae (strain WSM419) (Ensifer medicae), this protein is Beta-ketoacyl-[acyl-carrier-protein] synthase III.